A 622-amino-acid chain; its full sequence is Chaperone protein HscA homolog (622 aa).

The protein belongs to the heat shock protein 70 family.

Chaperone involved in the maturation of iron-sulfur cluster-containing proteins. Has a low intrinsic ATPase activity which is markedly stimulated by HscB. The protein is Chaperone protein HscA homolog of Verminephrobacter eiseniae (strain EF01-2).